The primary structure comprises 184 residues: Peptide deformylase (184 aa).

Fe cation is bound by residues cysteine 98 and histidine 140. Glutamate 141 is an active-site residue. Residue histidine 144 coordinates Fe cation.

Belongs to the polypeptide deformylase family. The cofactor is Fe(2+).

The catalysed reaction is N-terminal N-formyl-L-methionyl-[peptide] + H2O = N-terminal L-methionyl-[peptide] + formate. Its function is as follows. Removes the formyl group from the N-terminal Met of newly synthesized proteins. Requires at least a dipeptide for an efficient rate of reaction. N-terminal L-methionine is a prerequisite for activity but the enzyme has broad specificity at other positions. This chain is Peptide deformylase, found in Phocaeicola vulgatus (strain ATCC 8482 / DSM 1447 / JCM 5826 / CCUG 4940 / NBRC 14291 / NCTC 11154) (Bacteroides vulgatus).